Here is an 85-residue protein sequence, read N- to C-terminus: Putative membrane protein insertion efficiency factor (85 aa).

This sequence belongs to the UPF0161 family.

Its subcellular location is the cell inner membrane. In terms of biological role, could be involved in insertion of integral membrane proteins into the membrane. In Shewanella woodyi (strain ATCC 51908 / MS32), this protein is Putative membrane protein insertion efficiency factor.